The following is a 323-amino-acid chain: Phosphate acyltransferase (323 aa).

The protein belongs to the PlsX family. Homodimer. Probably interacts with PlsY.

Its subcellular location is the cytoplasm. It carries out the reaction a fatty acyl-[ACP] + phosphate = an acyl phosphate + holo-[ACP]. It participates in lipid metabolism; phospholipid metabolism. Its function is as follows. Catalyzes the reversible formation of acyl-phosphate (acyl-PO(4)) from acyl-[acyl-carrier-protein] (acyl-ACP). This enzyme utilizes acyl-ACP as fatty acyl donor, but not acyl-CoA. In Finegoldia magna (strain ATCC 29328 / DSM 20472 / WAL 2508) (Peptostreptococcus magnus), this protein is Phosphate acyltransferase.